A 416-amino-acid polypeptide reads, in one-letter code: MLLILLSVALLALSSAQNLNEDVSQEESPSLIAGNPQGAPPQGGNKPQGPPSPPGKPQGPPPQGGNQPQGPPPPPGKPQGPPPQGGNKPQGPPPPGKPQGPPPQGDKSRSPRSPPGKPQGPPPQGGNQPQGPPPPPGKPQGPPPQGGNKPQGPPPPGKPQGPPPQGDNKSRSSRSPPGKPQGPPPQGGNQPQGPPPPPGKPQGPPPQGGNKPQGPPPPGKPQGPPPQGDNKSQSARSPPGKPQGPPPQGGNQPQGPPPPPGKPQGPPPQGGNKPQGPPPPGKPQGPPPQGGSKSRSSRSPPGKPQGPPPQGGNQPQGPPPPPGKPQGPPPQGGNKPQGPPPPGKPQGPPPQGGSKSRSARSPPGKPQGPPQQEGNNPQGPPPPAGGNPQQPQAPPAGQPQGPPRPPQGGRPSRPPQ.

The N-terminal stretch at 1–16 is a signal peptide; sequence MLLILLSVALLALSSA. Gln17 is subject to Pyrrolidone carboxylic acid. A compositionally biased stretch (polar residues) spans 19 to 28; sequence LNEDVSQEES. Residues 19 to 416 are disordered; it reads LNEDVSQEES…QGGRPSRPPQ (398 aa). At Ser24 the chain carries Phosphoserine. The span at 34–47 shows a compositional bias: low complexity; sequence GNPQGAPPQGGNKP. Composition is skewed to pro residues over residues 48-104 and 112-165; these read QGPP…PPPQ and RSPP…PPPQ. Ser52 carries the post-translational modification Phosphoserine. Tandem repeats lie at residues 53–72, 74–93, 94–113, 114–133, 135–154, 155–174, 176–195, 197–216, 217–236, 238–257, 259–278, 279–298, 300–319, 321–340, and 341–360. The 15 X 20 AA approximate tandem repeats of P-P-G-K-P-Q-G-P-P-P-Q-G-[GD]-[NKS]-[KSQ]-[PRS]-[QRS] [GPS]-[PSAR]-[PSR] stretch occupies residues 53–360; sequence PPGKPQGPPP…QGGSKSRSAR (308 aa). N-linked (GlcNAc...) asparagine glycosylation occurs at Asn168. Residues 177 to 227 show a composition bias toward pro residues; that stretch reads PGKPQGPPPQGGNQPQGPPPPPGKPQGPPPQGGNKPQGPPPPGKPQGPPPQ. A glycan (N-linked (GlcNAc...) asparagine) is linked at Asn230. Ser232 carries an O-linked (Hex) serine glycan. The span at 239-289 shows a compositional bias: pro residues; the sequence is PGKPQGPPPQGGNQPQGPPPPPGKPQGPPPQGGNKPQGPPPPGKPQGPPPQ. Asn272 is a glycosylation site (N-linked (GlcNAc...) asparagine). Low complexity predominate over residues 290-300; that stretch reads GGSKSRSSRSP. Pro residues-rich tracts occupy residues 301–351 and 378–416; these read PGKP…PPPQ and QGPP…RPPQ.

Post-translationally, N- and O-glycosylated. In head and neck cancer patients, O-glycosylated with glucosylgalactosyl carbohydrate moiety. This modification would require prior hydroxylation on the lysine residue. Proteolytically cleaved at the tripeptide Xaa-Pro-Gln, where Xaa in the P(3) position is mostly lysine. The endoprotease may be of microbial origin. In terms of processing, pyroglutamate formation occurs on terminal Gln residues of cleaved peptides. Pyroglutamate formation found on at least Gln-398 and Gln-400.

It is found in the secreted. In Homo sapiens (Human), this protein is Basic salivary proline-rich protein 2 (PRB2).